The sequence spans 539 residues: CTP synthase (539 aa).

Residues 1–267 (MTKYIFVTGG…DQKVVDFLHI (267 aa)) are amidoligase domain. Ser-13 serves as a coordination point for CTP. Ser-13 contacts UTP. 14–19 (SLGKGI) is a binding site for ATP. Position 54 (Tyr-54) interacts with L-glutamine. Asp-71 serves as a coordination point for ATP. Asp-71 and Glu-141 together coordinate Mg(2+). CTP-binding positions include 148 to 150 (DME), 188 to 193 (KSKPTQ), and Lys-224. Residues 188–193 (KSKPTQ) and Lys-224 contribute to the UTP site. The Glutamine amidotransferase type-1 domain occupies 294–537 (KITLVGKYVE…IGAASGLQVD (244 aa)). An L-glutamine-binding site is contributed by Gly-356. The active-site Nucleophile; for glutamine hydrolysis is the Cys-383. Residues 384 to 387 (LGMQ), Glu-407, and Arg-465 each bind L-glutamine. Catalysis depends on residues His-510 and Glu-512.

The protein belongs to the CTP synthase family. In terms of assembly, homotetramer.

It catalyses the reaction UTP + L-glutamine + ATP + H2O = CTP + L-glutamate + ADP + phosphate + 2 H(+). The enzyme catalyses L-glutamine + H2O = L-glutamate + NH4(+). It carries out the reaction UTP + NH4(+) + ATP = CTP + ADP + phosphate + 2 H(+). The protein operates within pyrimidine metabolism; CTP biosynthesis via de novo pathway; CTP from UDP: step 2/2. Allosterically activated by GTP, when glutamine is the substrate; GTP has no effect on the reaction when ammonia is the substrate. The allosteric effector GTP functions by stabilizing the protein conformation that binds the tetrahedral intermediate(s) formed during glutamine hydrolysis. Inhibited by the product CTP, via allosteric rather than competitive inhibition. Catalyzes the ATP-dependent amination of UTP to CTP with either L-glutamine or ammonia as the source of nitrogen. Regulates intracellular CTP levels through interactions with the four ribonucleotide triphosphates. In Lactobacillus delbrueckii subsp. bulgaricus (strain ATCC BAA-365 / Lb-18), this protein is CTP synthase.